We begin with the raw amino-acid sequence, 242 residues long: N-glycosylase/DNA lyase (242 aa).

3 residues coordinate 8-oxoguanine: Gln-25, Ser-52, and Trp-63. A helix-hairpin-helix region spans residues 119-183; it reads KSYYRDMNRL…VDARIERITR (65 aa). Lys-143 acts as the Schiff-base intermediate with DNA in catalysis. 8-oxoguanine contacts are provided by Phe-147 and Pro-173. Residue Asp-175 is part of the active site. The 8-oxoguanine site is built by Asp-209 and Trp-213.

Belongs to the archaeal N-glycosylase/DNA lyase (AGOG) family.

The enzyme catalyses 2'-deoxyribonucleotide-(2'-deoxyribose 5'-phosphate)-2'-deoxyribonucleotide-DNA = a 3'-end 2'-deoxyribonucleotide-(2,3-dehydro-2,3-deoxyribose 5'-phosphate)-DNA + a 5'-end 5'-phospho-2'-deoxyribonucleoside-DNA + H(+). In terms of biological role, DNA repair enzyme that is part of the base excision repair (BER) pathway; protects from oxidative damage by removing the major product of DNA oxidation, 8-oxoguanine (GO), from single- and double-stranded DNA substrates. This chain is N-glycosylase/DNA lyase, found in Methanopyrus kandleri (strain AV19 / DSM 6324 / JCM 9639 / NBRC 100938).